Here is a 303-residue protein sequence, read N- to C-terminus: Leukocyte immunoglobulin-like receptor subfamily B member 4B (303 aa).

Residues 1–23 (MIAMLTVLLYLALILEPRTAVQA) form the signal peptide. Residues 24-238 (GHLPKPIIWA…TEDGLETYQK (215 aa)) are Extracellular-facing. 2 Ig-like C2-type domains span residues 42-123 (YTSV…AYEN) and 124-212 (PSLS…KPSN). A disulfide bond links Cys49 and Cys98. N-linked (GlcNAc...) asparagine glycosylation is found at Asn79, Asn133, and Asn191. An intrachain disulfide couples Cys144 to Cys196. The helical transmembrane segment at 239–260 (ILIGVLVSFLLLFFLLLFLILI) threads the bilayer. Topologically, residues 261-303 (GYQCRHKNKANASVKNTQSEDNAELNSWNPQNEDPPRELCTPR) are cytoplasmic. Residues 275–292 (KNTQSEDNAELNSWNPQN) are compositionally biased toward polar residues. Residues 275 to 303 (KNTQSEDNAELNSWNPQNEDPPRELCTPR) are disordered.

In terms of assembly, monomer and homodimer. Expressed on mast cells (at protein level). Also expressed at much lower levels on natural killer cells (at protein level).

The protein localises to the cell membrane. In terms of biological role, plays a role in mast cell activation. This is Leukocyte immunoglobulin-like receptor subfamily B member 4B from Mus musculus (Mouse).